We begin with the raw amino-acid sequence, 673 residues long: MSHAPIQTAALSWNEQGTPVSKQFDDVYFSNQDGLEETRYVFLKGNRLPSRFAEHPRPLFIVAETGFGTGLNFLTLWQAFADFHATTPDATLQRLHFISFEKFPLLQADLAAAHARWPELAPYADELRAQWPLPLPGCHRLLLAEGRITLDLWFGDVNELLPHFDASMHRQIDAWFLDGFAPSKNPDMWTEQLFAAMARFARPGGSLATFTAAGFVRRGLQQAGFEVIKSKGFGQKREMLIGELPADAPAVAHPTPWLLRPAADNTDDIAIIGGGVASALTALALLRRGAKVTLYCADPQAAEGASGNRQGALYPLLNGRGDALENFFSAAFLFARRQYDALLKQGVTFDHQWCGVSQLAYDEKSAGKIANMLAVEWPQQLAVAADRTTLSALCGIDSGFGGINYPQGGWLCPAELTRNAIALAQHQGLSCHYESDVKALTATDSGWQLSFNQEETRQHATVILANGHRLGELAPSEALPVYAVRGQVSHIPTTPALSELKQVLCYDGYLTPVNANNQQHCIGASYQRGETATEYREEEQQDNRARLLRCLPEQSWPAQVDVSGQHARCGVRSATRDHLPMIGAVPDYQATLTQYQHLQRQHQRGEAIANAPSYPNLFVIGALGSRGLCSAPLAAEILAAQLFGEPLPGDADMLAALNPNRMWVRKLLKGRAV.

The tract at residues Met1–Pro245 is tRNA (mnm(5)s(2)U34)-methyltransferase. An FAD-dependent cmnm(5)s(2)U34 oxidoreductase region spans residues Ile272–Val673.

In the N-terminal section; belongs to the methyltransferase superfamily. tRNA (mnm(5)s(2)U34)-methyltransferase family. This sequence in the C-terminal section; belongs to the DAO family. FAD is required as a cofactor.

It localises to the cytoplasm. It catalyses the reaction 5-aminomethyl-2-thiouridine(34) in tRNA + S-adenosyl-L-methionine = 5-methylaminomethyl-2-thiouridine(34) in tRNA + S-adenosyl-L-homocysteine + H(+). In terms of biological role, catalyzes the last two steps in the biosynthesis of 5-methylaminomethyl-2-thiouridine (mnm(5)s(2)U) at the wobble position (U34) in tRNA. Catalyzes the FAD-dependent demodification of cmnm(5)s(2)U34 to nm(5)s(2)U34, followed by the transfer of a methyl group from S-adenosyl-L-methionine to nm(5)s(2)U34, to form mnm(5)s(2)U34. This Serratia proteamaculans (strain 568) protein is tRNA 5-methylaminomethyl-2-thiouridine biosynthesis bifunctional protein MnmC.